The sequence spans 89 residues: Small ribosomal subunit protein uS15 (89 aa).

This sequence belongs to the universal ribosomal protein uS15 family. Part of the 30S ribosomal subunit. Forms a bridge to the 50S subunit in the 70S ribosome, contacting the 23S rRNA.

One of the primary rRNA binding proteins, it binds directly to 16S rRNA where it helps nucleate assembly of the platform of the 30S subunit by binding and bridging several RNA helices of the 16S rRNA. In terms of biological role, forms an intersubunit bridge (bridge B4) with the 23S rRNA of the 50S subunit in the ribosome. The polypeptide is Small ribosomal subunit protein uS15 (Granulibacter bethesdensis (strain ATCC BAA-1260 / CGDNIH1)).